Consider the following 445-residue polypeptide: Argininosuccinate synthase (445 aa).

ATP-binding positions include Ala-17–Ser-25 and Ala-43. Residue Tyr-99 participates in L-citrulline binding. Positions 129 and 131 each coordinate ATP. Residues Thr-131, Asn-135, and Asp-136 each coordinate L-aspartate. Asn-135 is an L-citrulline binding site. Residue Asp-136 participates in ATP binding. Arg-139 and Ser-192 together coordinate L-citrulline. Asp-194 is an ATP binding site. The L-citrulline site is built by Thr-201, Glu-203, and Glu-280.

This sequence belongs to the argininosuccinate synthase family. Type 2 subfamily. In terms of assembly, homotetramer.

The protein resides in the cytoplasm. It catalyses the reaction L-citrulline + L-aspartate + ATP = 2-(N(omega)-L-arginino)succinate + AMP + diphosphate + H(+). The protein operates within amino-acid biosynthesis; L-arginine biosynthesis; L-arginine from L-ornithine and carbamoyl phosphate: step 2/3. This Herminiimonas arsenicoxydans protein is Argininosuccinate synthase.